Here is a 215-residue protein sequence, read N- to C-terminus: Biogenesis of lysosome-related organelles complex 1 subunit 4 (215 aa).

The interval 1 to 57 (MEEGPAVGTLSREVSTEEAEPLGAAWSGDSGHVSQSHSSASGPWDDDGPEDAPGRDL) is disordered. A compositionally biased stretch (low complexity) spans 27–42 (SGDSGHVSQSHSSASG). Coiled-coil stretches lie at residues 80-97 (EVEA…KVDE) and 134-165 (IDKL…LGTF). Position 164 is a phosphothreonine (Thr164).

This sequence belongs to the BLOC1S4 family. In terms of assembly, octamer composed of one copy each BLOC1S1, BLOC1S2, BLOC1S3, BLOC1S4, BLOC1S5, BLOC1S6, DTNBP1/BLOC1S7 and SNAPIN/BLOC1S8. Component of the biogenesis of lysosome-related organelles complex 1 (BLOC-1) composed of BLOC1S1, BLOC1S2, BLOC1S3, BLOC1S4, BLOC1S5, BLOC1S6, DTNBP1/BLOC1S7 and SNAPIN/BLOC1S8. The BLOC-1 complex associates with the AP-3 protein complex and membrane protein cargos. Interacts with BLOC1S5 and BLOC1S6. As to expression, widely expressed.

It localises to the cytoplasm. Functionally, component of the BLOC-1 complex, a complex that is required for normal biogenesis of lysosome-related organelles (LRO), such as platelet dense granules and melanosomes. In concert with the AP-3 complex, the BLOC-1 complex is required to target membrane protein cargos into vesicles assembled at cell bodies for delivery into neurites and nerve terminals. The BLOC-1 complex, in association with SNARE proteins, is also proposed to be involved in neurite extension. Plays a role in intracellular vesicle trafficking. This is Biogenesis of lysosome-related organelles complex 1 subunit 4 (Bloc1s4) from Mus musculus (Mouse).